A 129-amino-acid chain; its full sequence is Small ribosomal subunit protein uS11 (129 aa).

It belongs to the universal ribosomal protein uS11 family. As to quaternary structure, part of the 30S ribosomal subunit. Interacts with proteins S7 and S18. Binds to IF-3.

Functionally, located on the platform of the 30S subunit, it bridges several disparate RNA helices of the 16S rRNA. Forms part of the Shine-Dalgarno cleft in the 70S ribosome. The chain is Small ribosomal subunit protein uS11 from Bradyrhizobium sp. (strain BTAi1 / ATCC BAA-1182).